The chain runs to 437 residues: Argininosuccinate lyase (437 aa).

The protein belongs to the lyase 1 family. Argininosuccinate lyase subfamily.

The protein localises to the cytoplasm. It carries out the reaction 2-(N(omega)-L-arginino)succinate = fumarate + L-arginine. It participates in amino-acid biosynthesis; L-arginine biosynthesis; L-arginine from L-ornithine and carbamoyl phosphate: step 3/3. The protein is Argininosuccinate lyase of Clostridium acetobutylicum (strain ATCC 824 / DSM 792 / JCM 1419 / IAM 19013 / LMG 5710 / NBRC 13948 / NRRL B-527 / VKM B-1787 / 2291 / W).